Reading from the N-terminus, the 151-residue chain is Probable cGMP 3',5'-cyclic phosphodiesterase subunit delta (151 aa).

This sequence belongs to the PDE6D/unc-119 family. As to quaternary structure, interacts with Pde6.

The protein resides in the nucleus. The protein localises to the cytoplasm. The polypeptide is Probable cGMP 3',5'-cyclic phosphodiesterase subunit delta (Drosophila persimilis (Fruit fly)).